Reading from the N-terminus, the 68-residue chain is Large ribosomal subunit protein uL29 (68 aa).

Belongs to the universal ribosomal protein uL29 family.

The protein is Large ribosomal subunit protein uL29 of Streptococcus gordonii (strain Challis / ATCC 35105 / BCRC 15272 / CH1 / DL1 / V288).